The following is a 344-amino-acid chain: Fructose-1,6-bisphosphatase class 1 (344 aa).

Residues Glu-92, Asp-115, Leu-117, and Asp-118 each contribute to the Mg(2+) site. Residues 118–121, Asn-211, Tyr-244, and Lys-274 contribute to the substrate site; that span reads DGSS. Glu-280 lines the Mg(2+) pocket.

The protein belongs to the FBPase class 1 family. In terms of assembly, homotetramer. Mg(2+) is required as a cofactor.

The protein resides in the cytoplasm. The catalysed reaction is beta-D-fructose 1,6-bisphosphate + H2O = beta-D-fructose 6-phosphate + phosphate. The protein operates within carbohydrate biosynthesis; gluconeogenesis. This is Fructose-1,6-bisphosphatase class 1 from Aeromonas salmonicida (strain A449).